The primary structure comprises 117 residues: Ribonuclease P protein component (117 aa).

It belongs to the RnpA family. In terms of assembly, consists of a catalytic RNA component (M1 or rnpB) and a protein subunit.

It catalyses the reaction Endonucleolytic cleavage of RNA, removing 5'-extranucleotides from tRNA precursor.. RNaseP catalyzes the removal of the 5'-leader sequence from pre-tRNA to produce the mature 5'-terminus. It can also cleave other RNA substrates such as 4.5S RNA. The protein component plays an auxiliary but essential role in vivo by binding to the 5'-leader sequence and broadening the substrate specificity of the ribozyme. The polypeptide is Ribonuclease P protein component (Thermotoga maritima (strain ATCC 43589 / DSM 3109 / JCM 10099 / NBRC 100826 / MSB8)).